Here is a 283-residue protein sequence, read N- to C-terminus: Acetylglutamate kinase (283 aa).

Residues 64-65, arginine 86, and asparagine 179 contribute to the substrate site; that span reads GG.

The protein belongs to the acetylglutamate kinase family. ArgB subfamily.

It is found in the cytoplasm. The enzyme catalyses N-acetyl-L-glutamate + ATP = N-acetyl-L-glutamyl 5-phosphate + ADP. Its pathway is amino-acid biosynthesis; L-arginine biosynthesis; N(2)-acetyl-L-ornithine from L-glutamate: step 2/4. Functionally, catalyzes the ATP-dependent phosphorylation of N-acetyl-L-glutamate. This chain is Acetylglutamate kinase, found in Campylobacter hominis (strain ATCC BAA-381 / DSM 21671 / CCUG 45161 / LMG 19568 / NCTC 13146 / CH001A).